We begin with the raw amino-acid sequence, 177 residues long: Putative 3-methyladenine DNA glycosylase (177 aa).

Belongs to the DNA glycosylase MPG family.

This Rickettsia felis (strain ATCC VR-1525 / URRWXCal2) (Rickettsia azadi) protein is Putative 3-methyladenine DNA glycosylase.